We begin with the raw amino-acid sequence, 561 residues long: Dihydroxy-acid dehydratase (561 aa).

Cys-51 serves as a coordination point for [2Fe-2S] cluster. Residue Asp-83 participates in Mg(2+) binding. Cys-124 contacts [2Fe-2S] cluster. The Mg(2+) site is built by Asp-125 and Lys-126. Lys-126 is subject to N6-carboxylysine. Cys-196 lines the [2Fe-2S] cluster pocket. Glu-448 is a Mg(2+) binding site. The active-site Proton acceptor is the Ser-474.

The protein belongs to the IlvD/Edd family. Homodimer. [2Fe-2S] cluster serves as cofactor. The cofactor is Mg(2+).

The enzyme catalyses (2R)-2,3-dihydroxy-3-methylbutanoate = 3-methyl-2-oxobutanoate + H2O. The catalysed reaction is (2R,3R)-2,3-dihydroxy-3-methylpentanoate = (S)-3-methyl-2-oxopentanoate + H2O. Its pathway is amino-acid biosynthesis; L-isoleucine biosynthesis; L-isoleucine from 2-oxobutanoate: step 3/4. The protein operates within amino-acid biosynthesis; L-valine biosynthesis; L-valine from pyruvate: step 3/4. Functionally, functions in the biosynthesis of branched-chain amino acids. Catalyzes the dehydration of (2R,3R)-2,3-dihydroxy-3-methylpentanoate (2,3-dihydroxy-3-methylvalerate) into 2-oxo-3-methylpentanoate (2-oxo-3-methylvalerate) and of (2R)-2,3-dihydroxy-3-methylbutanoate (2,3-dihydroxyisovalerate) into 2-oxo-3-methylbutanoate (2-oxoisovalerate), the penultimate precursor to L-isoleucine and L-valine, respectively. This chain is Dihydroxy-acid dehydratase, found in Pyrobaculum neutrophilum (strain DSM 2338 / JCM 9278 / NBRC 100436 / V24Sta) (Thermoproteus neutrophilus).